Consider the following 330-residue polypeptide: Glycoprotein integral membrane protein 1 (330 aa).

A signal peptide spans 1-23 (MEGAPLGPLALRLLLFVALPASG). At 24–268 (WLTTGAPEPP…VFPVFFQFLN (245 aa)) the chain is on the extracellular side. N-linked (GlcNAc...) asparagine glycans are attached at residues Asn46, Asn64, Asn166, and Asn191. Residues 269–289 (IMVVGITGAAVVITILKVLFP) traverse the membrane as a helical segment. Over 290-330 (VSEYKGILQLDKVDVIPVTAINLYPDGPEKTAENLEDKTCI) the chain is Cytoplasmic.

The protein localises to the membrane. The protein is Glycoprotein integral membrane protein 1 (GINM1) of Pongo abelii (Sumatran orangutan).